The sequence spans 188 residues: ATP synthase subunit delta (188 aa).

This sequence belongs to the ATPase delta chain family. F-type ATPases have 2 components, F(1) - the catalytic core - and F(0) - the membrane proton channel. F(1) has five subunits: alpha(3), beta(3), gamma(1), delta(1), epsilon(1). F(0) has three main subunits: a(1), b(2) and c(10-14). The alpha and beta chains form an alternating ring which encloses part of the gamma chain. F(1) is attached to F(0) by a central stalk formed by the gamma and epsilon chains, while a peripheral stalk is formed by the delta and b chains.

It localises to the cell inner membrane. F(1)F(0) ATP synthase produces ATP from ADP in the presence of a proton or sodium gradient. F-type ATPases consist of two structural domains, F(1) containing the extramembraneous catalytic core and F(0) containing the membrane proton channel, linked together by a central stalk and a peripheral stalk. During catalysis, ATP synthesis in the catalytic domain of F(1) is coupled via a rotary mechanism of the central stalk subunits to proton translocation. Its function is as follows. This protein is part of the stalk that links CF(0) to CF(1). It either transmits conformational changes from CF(0) to CF(1) or is implicated in proton conduction. This Sinorhizobium fredii (strain NBRC 101917 / NGR234) protein is ATP synthase subunit delta.